We begin with the raw amino-acid sequence, 453 residues long: tRNA modification GTPase MnmE (453 aa).

(6S)-5-formyl-5,6,7,8-tetrahydrofolate-binding residues include R22, E79, and K119. Residues 215 to 376 (GMKVVIAGRP…LKQHLKSLMG (162 aa)) form the TrmE-type G domain. N225 lines the K(+) pocket. GTP contacts are provided by residues 225–230 (NAGKSS), 244–250 (TEIAGTT), 269–272 (DTAG), and 334–337 (NKAD). Residue S229 participates in Mg(2+) binding. The K(+) site is built by T244, I246, and T249. T250 is a Mg(2+) binding site. Residue K453 participates in (6S)-5-formyl-5,6,7,8-tetrahydrofolate binding.

It belongs to the TRAFAC class TrmE-Era-EngA-EngB-Septin-like GTPase superfamily. TrmE GTPase family. In terms of assembly, homodimer. Heterotetramer of two MnmE and two MnmG subunits. The cofactor is K(+).

The protein resides in the cytoplasm. Functionally, exhibits a very high intrinsic GTPase hydrolysis rate. Involved in the addition of a carboxymethylaminomethyl (cmnm) group at the wobble position (U34) of certain tRNAs, forming tRNA-cmnm(5)s(2)U34. This Shewanella denitrificans (strain OS217 / ATCC BAA-1090 / DSM 15013) protein is tRNA modification GTPase MnmE.